A 150-amino-acid polypeptide reads, in one-letter code: Ventricular natriuretic peptide (150 aa).

The signal sequence occupies residues 1–21; the sequence is MAKSGIYLGCFILILIQNMVA. The interval 52 to 75 is disordered; the sequence is EEPEVYPESEDMKMDAEEEDAGIS. Cys-120 and Cys-136 are joined by a disulfide.

Belongs to the natriuretic peptide family. As to expression, heart ventricle, and to a lower extent in heart atrium.

It is found in the secreted. Its function is as follows. Exhibits natriuretic and vasodepressor activity. The protein is Ventricular natriuretic peptide (vnp) of Anguilla japonica (Japanese eel).